The chain runs to 485 residues: Adenosylhomocysteinase (485 aa).

Substrate is bound by residues T64, D139, and E205. Position 206–208 (206–208 (TTT)) interacts with NAD(+). Substrate-binding residues include K235 and D239. Residues N240, 269–274 (GYGDVG), E292, N327, 348–350 (IGH), and N397 contribute to the NAD(+) site.

It belongs to the adenosylhomocysteinase family. In terms of assembly, homotetramer. NAD(+) is required as a cofactor. Mainly in floral buds and stems.

The catalysed reaction is S-adenosyl-L-homocysteine + H2O = L-homocysteine + adenosine. Its pathway is amino-acid biosynthesis; L-homocysteine biosynthesis; L-homocysteine from S-adenosyl-L-homocysteine: step 1/1. Functionally, adenosylhomocysteine is a competitive inhibitor of S-adenosyl-L-methionine-dependent methyl transferase reactions; therefore adenosylhomocysteinase may play a key role in the control of methylations via regulation of the intracellular concentration of adenosylhomocysteine. The chain is Adenosylhomocysteinase (SAHH) from Petroselinum crispum (Parsley).